Reading from the N-terminus, the 250-residue chain is Probable transcriptional regulatory protein RC1_1808 (250 aa).

The interval 1–21 (MAGHSQFKNIMHRKGAQDAKR) is disordered.

Belongs to the TACO1 family.

The protein resides in the cytoplasm. This is Probable transcriptional regulatory protein RC1_1808 from Rhodospirillum centenum (strain ATCC 51521 / SW).